Reading from the N-terminus, the 453-residue chain is Bis(5'-adenosyl)-triphosphatase ENPP4 (453 aa).

The N-terminal stretch at M1–G15 is a signal peptide. Topologically, residues F16–A407 are extracellular. Zn(2+)-binding residues include D34 and T70. T70 (AMP-threonine intermediate) is an active-site residue. 2 residues coordinate substrate: N91 and Y154. N155 and N166 each carry an N-linked (GlcNAc...) asparagine glycan. Residues D189, H193, D237, and H238 each coordinate Zn(2+). D189 contacts substrate. C254 and C287 are disulfide-bonded. N276 carries N-linked (GlcNAc...) asparagine glycosylation. H336 contributes to the Zn(2+) binding site. Residue N386 is glycosylated (N-linked (GlcNAc...) asparagine). A disulfide bridge links C394 with C401. Residues I408–M428 traverse the membrane as a helical segment. At Q429–G453 the chain is on the cytoplasmic side.

This sequence belongs to the nucleotide pyrophosphatase/phosphodiesterase family. It depends on Zn(2+) as a cofactor. As to expression, expressed on the surface of vascular endothelia.

The protein localises to the cell membrane. The catalysed reaction is P(1),P(3)-bis(5'-adenosyl) triphosphate + H2O = AMP + ADP + 2 H(+). In terms of biological role, hydrolyzes extracellular Ap3A into AMP and ADP, and Ap4A into AMP and ATP. Ap3A and Ap4A are diadenosine polyphosphates thought to induce proliferation of vascular smooth muscle cells. Acts as a procoagulant, mediating platelet aggregation at the site of nascent thrombus via release of ADP from Ap3A and activation of ADP receptors. The polypeptide is Bis(5'-adenosyl)-triphosphatase ENPP4 (ENPP4) (Homo sapiens (Human)).